A 295-amino-acid polypeptide reads, in one-letter code: Mediator of RNA polymerase II transcription subunit 27 (295 aa).

Belongs to the Mediator complex subunit 27 family. In terms of assembly, component of the Mediator complex.

It is found in the nucleus. Its function is as follows. Component of the Mediator complex, a coactivator involved in the regulated transcription of nearly all RNA polymerase II-dependent genes. Mediator functions as a bridge to convey information from gene-specific regulatory proteins to the basal RNA polymerase II transcription machinery. Mediator is recruited to promoters by direct interactions with regulatory proteins and serves as a scaffold for the assembly of a functional preinitiation complex with RNA polymerase II and the general transcription factors. The sequence is that of Mediator of RNA polymerase II transcription subunit 27 (MED27) from Aedes aegypti (Yellowfever mosquito).